The following is a 114-amino-acid chain: UPF0145 protein Acry_1752 (114 aa).

The protein belongs to the UPF0145 family.

The chain is UPF0145 protein Acry_1752 from Acidiphilium cryptum (strain JF-5).